Consider the following 105-residue polypeptide: Large ribosomal subunit protein uL24 (105 aa).

Belongs to the universal ribosomal protein uL24 family. Part of the 50S ribosomal subunit.

In terms of biological role, one of two assembly initiator proteins, it binds directly to the 5'-end of the 23S rRNA, where it nucleates assembly of the 50S subunit. One of the proteins that surrounds the polypeptide exit tunnel on the outside of the subunit. The chain is Large ribosomal subunit protein uL24 from Rhizorhabdus wittichii (strain DSM 6014 / CCUG 31198 / JCM 15750 / NBRC 105917 / EY 4224 / RW1) (Sphingomonas wittichii).